Here is a 391-residue protein sequence, read N- to C-terminus: GTPase Obg (391 aa).

The region spanning 1–159 (MKFIDEALIR…RDLQLELMLL (159 aa)) is the Obg domain. One can recognise an OBG-type G domain in the interval 160–333 (ADVGMLGLPN…LTRDIMDFIE (174 aa)). GTP-binding positions include 166–173 (GLPNAGKS), 191–195 (FTTLV), 213–216 (DIPG), 283–286 (NKID), and 314–316 (SAA). 2 residues coordinate Mg(2+): Ser-173 and Thr-193. The segment at 361–391 (QNPITEDDWDDLDDDGWTEEDDEGVEFIYKP) is disordered. Positions 365 to 385 (TEDDWDDLDDDGWTEEDDEGV) are enriched in acidic residues.

Belongs to the TRAFAC class OBG-HflX-like GTPase superfamily. OBG GTPase family. In terms of assembly, monomer. It depends on Mg(2+) as a cofactor.

It is found in the cytoplasm. Its function is as follows. An essential GTPase which binds GTP, GDP and possibly (p)ppGpp with moderate affinity, with high nucleotide exchange rates and a fairly low GTP hydrolysis rate. Plays a role in control of the cell cycle, stress response, ribosome biogenesis and in those bacteria that undergo differentiation, in morphogenesis control. The sequence is that of GTPase Obg from Glaesserella parasuis serovar 5 (strain SH0165) (Haemophilus parasuis).